We begin with the raw amino-acid sequence, 1169 residues long: Translation initiation factor IF-2 (1169 aa).

Disordered regions lie at residues 69-108 (IKAK…PLLI) and 139-568 (ALSK…LRAA). Basic and acidic residues-rich tracts occupy residues 71 to 83 (AKNE…DNKN) and 92 to 102 (HPEKLSKEGLN). The segment covering 139–156 (ALSKNQNKTNTSVITTPN) has biased composition (polar residues). Over residues 157–171 (LKDKKNPSALQDKKP) the composition is skewed to basic and acidic residues. Residues 196–214 (NLANSNRNINANKINNSVN) show a composition bias toward low complexity. Over residues 231–248 (ADNNNFPKKNLNSPNVKS) the composition is skewed to polar residues. The segment covering 265-281 (NTNRPNSNSRQPSSNTQ) has biased composition (low complexity). 3 stretches are compositionally biased toward polar residues: residues 282–294 (ISAN…NRQG), 412–432 (MQLQ…NVNK), and 439–455 (NQKT…SPSP). Residues 472 to 486 (GRTDWDDSAKLEALR) show a composition bias toward basic and acidic residues. A compositionally biased stretch (basic residues) spans 544–560 (KQFKKKKKETTRQRQKR). Residues 661–838 (KRPPVITVMG…EVEDLQANPE (178 aa)) form the tr-type G domain. Residues 670–677 (GHVDHGKT) are G1. 670-677 (GHVDHGKT) serves as a coordination point for GTP. Positions 695 to 699 (GITQH) are G2. Positions 720-723 (DTPG) are G3. GTP-binding positions include 720–724 (DTPGH) and 774–777 (NKID). Residues 774 to 777 (NKID) are G4. The G5 stretch occupies residues 810-812 (SAI).

It belongs to the TRAFAC class translation factor GTPase superfamily. Classic translation factor GTPase family. IF-2 subfamily.

The protein resides in the cytoplasm. Its function is as follows. One of the essential components for the initiation of protein synthesis. Protects formylmethionyl-tRNA from spontaneous hydrolysis and promotes its binding to the 30S ribosomal subunits. Also involved in the hydrolysis of GTP during the formation of the 70S ribosomal complex. The sequence is that of Translation initiation factor IF-2 from Prochlorococcus marinus subsp. pastoris (strain CCMP1986 / NIES-2087 / MED4).